Here is a 225-residue protein sequence, read N- to C-terminus: Plasma membrane-associated cation-binding protein 1 (225 aa).

Residue glycine 2 is the site of N-myristoyl glycine attachment. Position 32 is a phosphothreonine (threonine 32). The residue at position 107 (serine 107) is a Phosphoserine. Basic and acidic residues predominate over residues 140 to 197 (PVEEVKAEEPAKTEEPAKTEGTSGEKEEIVEETKKGETPETAVVEEKKPEVEEKKEEA). The tract at residues 140–225 (PVEEVKAEEP…TAPVAEPPKP (86 aa)) is disordered. A phosphothreonine mark is found at threonine 152 and threonine 177.

The protein belongs to the DREPP family. In terms of assembly, interacts with Turnip mosaic virus (TuMV) P3N-PIPO. It depends on Cu(2+) as a cofactor. As to expression, mostly expressed in the basal region of hypocotyls. Expressed in seedlings, roots, shoots, stems, leaves (e.g. in epidermis and vascular tissues), flowers (e.g. in pistils and anthers) and siliques (at protein level).

It is found in the cell membrane. It localises to the cytoplasm. The protein resides in the cytoskeleton. Its subcellular location is the cell junction. The protein localises to the plasmodesma. Functionally, may be involved in intracellular signaling through interaction with PtdInsPs and calmodulin (CaM); may keep PtdInsPs attached to the plasma membrane until Ca(2+)-CaM reaches a competitive concentration subsequent to an increase triggered by a stimulus, thus leading to PtdInsPs release and subsequent activation of InsPs-dependent signaling cascade. Interacts competitively at the N-terminus with calcium ions and CaM (in a calcium-dependent manner), and with the phosphatidylinositol phosphates PtdIns(3,4,5)P(3), PtdIns(3,4)P(2), PtdIns(4,5)P(2) and PtdIns(3,5)P(2). Also binds weakly to PtdIns(3)P, PtdIns(4)P and PtdIns(5)P. Negative regulator of hypocotyl cell elongation by destabilizing cortical microtubules in a calcium-dependent manner. Binds directly to and destabilized microtubules to enhance microtubule depolymerization when cytoplasmic calcium increases. In case of Turnip mosaic virus (TuMV) infection, confers sensitivity by promoting viral cell-to-cell movement through interaction with viral P3N-PIPO. The sequence is that of Plasma membrane-associated cation-binding protein 1 (PCAP1) from Arabidopsis thaliana (Mouse-ear cress).